Here is a 522-residue protein sequence, read N- to C-terminus: Protein disulfide-isomerase (522 aa).

The segment at residues 1–28 (MKFSAGAVLSWSSLLLASSVFAQQEAVA) is a signal peptide (or 22). Positions 29 to 141 (PEDSAVVKLA…VQFMIKQSQP (113 aa)) constitute a Thioredoxin 1 domain. Active-site nucleophile residues include Cys-61 and Cys-64. Cysteines 61 and 64 form a disulfide. Asn-82, Asn-117, Asn-155, and Asn-174 each carry an N-linked (GlcNAc...) asparagine glycan. Residues 356-485 (FLKGDASPIV…LFDFIKENGH (130 aa)) form the Thioredoxin 2 domain. Catalysis depends on nucleophile residues Cys-406 and Cys-409. A disulfide bridge links Cys-406 with Cys-409. N-linked (GlcNAc...) asparagine glycosylation occurs at Asn-425. The segment at 497–522 (AQEKAAEEADADAELADEEDAIHDEL) is disordered. Over residues 504 to 522 (EADADAELADEEDAIHDEL) the composition is skewed to acidic residues. A Prevents secretion from ER motif is present at residues 519–522 (HDEL).

This sequence belongs to the protein disulfide isomerase family. Interacts with EPS1, KAR2 and MNL1. The N-terminus is blocked.

The protein localises to the endoplasmic reticulum lumen. It catalyses the reaction Catalyzes the rearrangement of -S-S- bonds in proteins.. In terms of biological role, protein disulfide isomerase of ER lumen required for formation of disulfide bonds in secretory and cell-surface proteins and which unscrambles non-native disulfide bonds. Forms a complex with MNL1 to process unfolded protein-bound Man8GlcNAc2 oligosaccharides to Man7GlcNAc2, promoting degradation in unfolded protein response. The protein is Protein disulfide-isomerase (PDI1) of Saccharomyces cerevisiae (strain ATCC 204508 / S288c) (Baker's yeast).